Reading from the N-terminus, the 308-residue chain is MSAQKPGLHPRNRHHSRYDLATLCQVNPELKQFLTLTPAGEQSVDFANPLAVKALNKALLAHFYAVANWDIPDGFLCPPVPGRADYIHHLADLLAEASGTIPANASILDIGVGANCIYPLIGVHEYGWRFTGSETSSQALSSAQAIISANPGLNRAIRLRRQKESGAIFNGIIHKNEQYDATLCNPPFHDSAAAARAGSECKRRNLGLNKDDALNFGGQQQELWCEGGEVTFIKKMIEESKGFAKQVMWFTSLVSRGENLPPLYRALTDVGAVKVVKKEMAQGQKQSRFIAWTFMNDEQRRRFVNRQR.

This sequence belongs to the methyltransferase superfamily. METTL16/RlmF family.

Its subcellular location is the cytoplasm. The catalysed reaction is adenosine(1618) in 23S rRNA + S-adenosyl-L-methionine = N(6)-methyladenosine(1618) in 23S rRNA + S-adenosyl-L-homocysteine + H(+). Its function is as follows. Specifically methylates the adenine in position 1618 of 23S rRNA. This Escherichia coli O157:H7 protein is Ribosomal RNA large subunit methyltransferase F.